We begin with the raw amino-acid sequence, 104 residues long: Cysteine-rich and transmembrane domain-containing protein 1 (104 aa).

2 stretches are compositionally biased toward pro residues: residues 1-25 and 33-47; these read MNPE…PQQP and GAPP…PPQG. The tract at residues 1-47 is disordered; that stretch reads MNPENPPPYPGPGPTAPYPPYPQQPMGPMGPMGAPPPQGYPYPPPQG. The helical transmembrane segment at 81–98 threads the bilayer; that stretch reads LGPSTCLTACWTALCCCC.

Belongs to the CYSTM1 family.

The protein resides in the membrane. The protein is Cysteine-rich and transmembrane domain-containing protein 1 (Cystm1) of Mus musculus (Mouse).